A 339-amino-acid chain; its full sequence is UDP-galactose transporter homolog 1 (339 aa).

Topologically, residues 1 to 4 (MAGS) are lumenal. A helical transmembrane segment spans residues 5–25 (TSSLVICAIGIYATFLTWALV). Residues 26 to 42 (QEPLATRTWPNSMGKFQ) lie on the Cytoplasmic side of the membrane. A helical transmembrane segment spans residues 43–63 (FPNVISLIQASVAMMMGYLYL). Residues 64–106 (NWKKVEYPPRKMIKDHWKQLMLISFTQSSSGPLATTSLKHVDY) lie on the Lumenal side of the membrane. Residues 107 to 127 (LTYMLAKSCKMIPVLLVHLLL) form a helical membrane-spanning segment. Topologically, residues 128–136 (YRTPIASQK) are cytoplasmic. Residues 137–157 (KVVALLVSLGVTIFTIGGNDG) form a helical membrane-spanning segment. At 158-174 (KKLKRSFNESGNDNKLQ) the chain is on the lumenal side. Asparagine 165 is a glycosylation site (N-linked (GlcNAc...) asparagine). The chain crosses the membrane as a helical span at residues 175-192 (GFGLLFSSLFLDGLTNAT). The Cytoplasmic portion of the chain corresponds to 193–214 (QDKLLKANKAKEKGKQTLITGA). A helical transmembrane segment spans residues 215–235 (HLMFTLNLFVILWNILYFIVI). Over 236–245 (DCKQWDNAVS) the chain is Lumenal. Residues 246-266 (VLTMDPQVWGYLMLYSFCGAM) form a helical membrane-spanning segment. The Cytoplasmic portion of the chain corresponds to 267–280 (GQCFIFYTLEQFGS). A helical transmembrane segment spans residues 281 to 303 (LVLIMITVTRKMVSMILSIIVFG). Residues 304–307 (KSVR) are Lumenal-facing. The helical transmembrane segment at 308–327 (FQQWVGMFIVFGGITWEALN) threads the bilayer. The Cytoplasmic portion of the chain corresponds to 328 to 339 (KKKANIPKAKSA).

It belongs to the nucleotide-sugar transporter family. SLC35B subfamily.

It is found in the endoplasmic reticulum membrane. Its function is as follows. May be involved in specific transport of UDP-Gal from the cytosol to the Golgi lumen. Involved in the maintenance of optimal conditions for the folding of secretory pathway proteins in the endoplasmic reticulum. Overexpression confers resistance to the immunosuppressive drug, leflunomide. The chain is UDP-galactose transporter homolog 1 (HUT1) from Saccharomyces cerevisiae (strain ATCC 204508 / S288c) (Baker's yeast).